A 137-amino-acid polypeptide reads, in one-letter code: Protein BNS1 (137 aa).

Its function is as follows. Component of the FEAR (CDC14 early anaphase release) network which promotes CDC14 release from the nucleolus during early anaphase and is required for the efficient segregation of telomeric and nucleolar regions. Although BNS1 can partially compensate for a lack of SPO12 function when overexpressed, it does not appear to play any role in controlling meiotic nuclear division. In Saccharomyces cerevisiae (strain ATCC 204508 / S288c) (Baker's yeast), this protein is Protein BNS1 (BNS1).